The primary structure comprises 99 residues: Putative pterin-4-alpha-carbinolamine dehydratase (99 aa).

The protein belongs to the pterin-4-alpha-carbinolamine dehydratase family.

The catalysed reaction is (4aS,6R)-4a-hydroxy-L-erythro-5,6,7,8-tetrahydrobiopterin = (6R)-L-erythro-6,7-dihydrobiopterin + H2O. The protein is Putative pterin-4-alpha-carbinolamine dehydratase of Aquifex aeolicus (strain VF5).